Consider the following 130-residue polypeptide: MRTKPQRPRATRSYLGQPCGSPRRTEETGETWERVAFSLFTHTCTQPLAGTVDTHLPSLLLPVILHPLGAASAGRALEPKADPHTCPYGRKESRGEKVRRGRAKSNSGPNVPGPPAAPQSLKSGSPSTRR.

The span at 1–10 (MRTKPQRPRA) shows a compositional bias: basic residues. 2 disordered regions span residues 1–29 (MRTK…EETG) and 74–130 (GRAL…STRR). A mediates interaction with SRSF3 region spans residues 16-22 (GQPCGSP). Positions 77 to 98 (LEPKADPHTCPYGRKESRGEKV) are enriched in basic and acidic residues. A compositionally biased stretch (polar residues) spans 120-130 (SLKSGSPSTRR).

As to quaternary structure, interacts with SRSF3; increases SRSF3 binding to specific exons.

Its subcellular location is the nucleus. Interacts with the splicing factor SRSF3 and increases its binding to specific exons within pre-mRNA, thereby regulating exon-inclusion during alternative splicing. Does not directly bind pre-mRNA and could regulate a wider range of splicing factors through a similar mechanism. The sequence is that of Splicing regulatory small protein from Homo sapiens (Human).